Reading from the N-terminus, the 399-residue chain is Glycerol-1-phosphate dehydrogenase [NAD(P)+] (399 aa).

Residues D56, 118–122 (GTIHD), and 140–143 (TAPS) each bind NAD(+). D145 lines the substrate pocket. S149 is a binding site for NAD(+). D192 provides a ligand contact to substrate. Positions 192 and 272 each coordinate Ni(2+). H276 is a binding site for substrate. H292 provides a ligand contact to Ni(2+).

Belongs to the glycerol-1-phosphate dehydrogenase family. In terms of assembly, homodimer. It depends on Ni(2+) as a cofactor.

It is found in the cytoplasm. The catalysed reaction is sn-glycerol 1-phosphate + NAD(+) = dihydroxyacetone phosphate + NADH + H(+). The enzyme catalyses sn-glycerol 1-phosphate + NADP(+) = dihydroxyacetone phosphate + NADPH + H(+). Its function is as follows. Catalyzes the NAD(P)H-dependent reduction of dihydroxyacetonephosphate (DHAP or glycerone phosphate) to glycerol 1-phosphate (G1P). The G1P thus generated is probably used for the synthesis of phosphoglycerolipids in Gram-positive bacterial species. The sequence is that of Glycerol-1-phosphate dehydrogenase [NAD(P)+] from Halalkalibacterium halodurans (strain ATCC BAA-125 / DSM 18197 / FERM 7344 / JCM 9153 / C-125) (Bacillus halodurans).